The chain runs to 244 residues: CTD nuclear envelope phosphatase 1 (244 aa).

A helical transmembrane segment spans residues 7–29 (LLGLRGFVAFAAKLWSFVLYLLR). In terms of domain architecture, FCP1 homology spans 58-225 (QVKRKVLVLD…NLLPMLDALR (168 aa)).

The protein belongs to the dullard family. In terms of assembly, interacts with bmpr1a, bmpr1b and bmpr2.

Its subcellular location is the membrane. The protein localises to the cytoplasm. It localises to the perinuclear region. It catalyses the reaction O-phospho-L-seryl-[protein] + H2O = L-seryl-[protein] + phosphate. The enzyme catalyses O-phospho-L-threonyl-[protein] + H2O = L-threonyl-[protein] + phosphate. In terms of biological role, serine/threonine protein phosphatase that may dephosphorylate and activate lipins. Lipins are phosphatidate phosphatases that catalyze the conversion of phosphatidic acid to diacylglycerol and control the metabolism of fatty acids at different levels. May indirectly modulate the lipid composition of nuclear and/or endoplasmic reticulum membranes and be required for proper nuclear membrane morphology and/or dynamics. May also indirectly regulate the production of lipid droplets and triacylglycerol. Induces neuronal differentiation by antagonizing BMP signaling. Acts both by dephosphorylating BMPR1A and by promoting BMPR2 proteasomal degradation. In Xenopus laevis (African clawed frog), this protein is CTD nuclear envelope phosphatase 1 (ctdnep1).